A 193-amino-acid polypeptide reads, in one-letter code: Bcl-2-binding component 3, isoforms 1/2 (193 aa).

2 disordered regions span residues 1-28 and 71-138; these read MARA…FPLG and ALGG…REIG. Ser-10 carries the post-translational modification Phosphoserine. Positions 71 to 82 are enriched in low complexity; that stretch reads ALGGSRWPGGPR. The BH3 motif lies at 137–151; that stretch reads IGAQLRRMADDLNAQ.

This sequence belongs to the Bcl-2 family. As to quaternary structure, interacts with MCL1 and BCL2A1. Interacts (via BH3 domain) with BCL2. Interacts with BCL2L1/BCL-XL. Interacts (via BH3 domain) with NOL3/ARC (via CARD domain); this interaction prevents BBC3 association with BCL2 and results in CASP8 activation. In terms of tissue distribution, ubiquitously expressed.

The protein localises to the mitochondrion. In terms of biological role, essential mediator of p53/TP53-dependent and p53/TP53-independent apoptosis. Promotes partial unfolding of BCL2L1 and dissociation of BCL2L1 from p53/TP53, releasing the bound p53/TP53 to induce apoptosis. Regulates ER stress-induced neuronal apoptosis. The protein is Bcl-2-binding component 3, isoforms 1/2 (BBC3) of Homo sapiens (Human).